Here is a 229-residue protein sequence, read N- to C-terminus: Biosynthetic peptidoglycan transglycosylase (229 aa).

Residues 11–31 form a helical membrane-spanning segment; the sequence is NLLLALFLVLVAGPVVAVILY.

This sequence belongs to the glycosyltransferase 51 family.

It localises to the cell inner membrane. The catalysed reaction is [GlcNAc-(1-&gt;4)-Mur2Ac(oyl-L-Ala-gamma-D-Glu-L-Lys-D-Ala-D-Ala)](n)-di-trans,octa-cis-undecaprenyl diphosphate + beta-D-GlcNAc-(1-&gt;4)-Mur2Ac(oyl-L-Ala-gamma-D-Glu-L-Lys-D-Ala-D-Ala)-di-trans,octa-cis-undecaprenyl diphosphate = [GlcNAc-(1-&gt;4)-Mur2Ac(oyl-L-Ala-gamma-D-Glu-L-Lys-D-Ala-D-Ala)](n+1)-di-trans,octa-cis-undecaprenyl diphosphate + di-trans,octa-cis-undecaprenyl diphosphate + H(+). It functions in the pathway cell wall biogenesis; peptidoglycan biosynthesis. Functionally, peptidoglycan polymerase that catalyzes glycan chain elongation from lipid-linked precursors. The polypeptide is Biosynthetic peptidoglycan transglycosylase (Caulobacter vibrioides (strain ATCC 19089 / CIP 103742 / CB 15) (Caulobacter crescentus)).